The following is a 318-amino-acid chain: tRNA methyltransferase 10 homolog B (318 aa).

Basic and acidic residues predominate over residues 1–10 (MDCKSEESAQ). The tract at residues 1 to 105 (MDCKSEESAQ…DPGNGTCPQH (105 aa)) is disordered. Residues 52-63 (SPANSAVWSSKN) are compositionally biased toward polar residues. Residues 64–83 (MQRKQRHWERIVSSKKSKRK) show a composition bias toward basic residues. A coiled-coil region spans residues 72–93 (ERIVSSKKSKRKQERERRKAKR). Residues 84-96 (QERERRKAKRAED) are compositionally biased toward basic and acidic residues. Residues 114 to 311 (TKEKLLEAKH…KGVSPGKGYV (198 aa)) enclose the SAM-dependent MTase TRM10-type domain.

This sequence belongs to the class IV-like SAM-binding methyltransferase superfamily. TRM10 family.

The enzyme catalyses guanosine(9) in tRNA + S-adenosyl-L-methionine = N(1)-methylguanosine(9) in tRNA + S-adenosyl-L-homocysteine + H(+). Its function is as follows. S-adenosyl-L-methionine-dependent guanine N(1)-methyltransferase that catalyzes the formation of N(1)-methylguanine at position 9 (m1G9) in tRNAs. Probably not able to catalyze formation of N(1)-methyladenine at position 9 (m1A9) in tRNAs. This is tRNA methyltransferase 10 homolog B (Trmt10b) from Mus musculus (Mouse).